A 409-amino-acid chain; its full sequence is Tyrosine--tRNA ligase (409 aa).

The 'HIGH' region motif lies at 43 to 52 (PTAPDLHLGH). The short motif at 227 to 231 (KMSKS) is the 'KMSKS' region element. K230 provides a ligand contact to ATP. An S4 RNA-binding domain is found at 338 to 399 (LALPQLLKLA…GKRKFAKVTL (62 aa)).

This sequence belongs to the class-I aminoacyl-tRNA synthetase family. TyrS type 2 subfamily. Homodimer.

It localises to the cytoplasm. The catalysed reaction is tRNA(Tyr) + L-tyrosine + ATP = L-tyrosyl-tRNA(Tyr) + AMP + diphosphate + H(+). In terms of biological role, catalyzes the attachment of tyrosine to tRNA(Tyr) in a two-step reaction: tyrosine is first activated by ATP to form Tyr-AMP and then transferred to the acceptor end of tRNA(Tyr). In Nitrosomonas europaea (strain ATCC 19718 / CIP 103999 / KCTC 2705 / NBRC 14298), this protein is Tyrosine--tRNA ligase.